The following is a 168-amino-acid chain: Crossover junction endodeoxyribonuclease RuvC (168 aa).

Active-site residues include Asp10, Glu70, and Asp143. Mg(2+)-binding residues include Asp10, Glu70, and Asp143.

This sequence belongs to the RuvC family. Homodimer which binds Holliday junction (HJ) DNA. The HJ becomes 2-fold symmetrical on binding to RuvC with unstacked arms; it has a different conformation from HJ DNA in complex with RuvA. In the full resolvosome a probable DNA-RuvA(4)-RuvB(12)-RuvC(2) complex forms which resolves the HJ. Mg(2+) serves as cofactor.

The protein localises to the cytoplasm. The catalysed reaction is Endonucleolytic cleavage at a junction such as a reciprocal single-stranded crossover between two homologous DNA duplexes (Holliday junction).. The RuvA-RuvB-RuvC complex processes Holliday junction (HJ) DNA during genetic recombination and DNA repair. Endonuclease that resolves HJ intermediates. Cleaves cruciform DNA by making single-stranded nicks across the HJ at symmetrical positions within the homologous arms, yielding a 5'-phosphate and a 3'-hydroxyl group; requires a central core of homology in the junction. The consensus cleavage sequence is 5'-(A/T)TT(C/G)-3'. Cleavage occurs on the 3'-side of the TT dinucleotide at the point of strand exchange. HJ branch migration catalyzed by RuvA-RuvB allows RuvC to scan DNA until it finds its consensus sequence, where it cleaves and resolves the cruciform DNA. This Thermotoga maritima (strain ATCC 43589 / DSM 3109 / JCM 10099 / NBRC 100826 / MSB8) protein is Crossover junction endodeoxyribonuclease RuvC.